The following is a 213-amino-acid chain: Pyridoxine/pyridoxamine 5'-phosphate oxidase 2 (213 aa).

Substrate is bound by residues 9 to 12 (RQRY) and Lys-67. FMN-binding positions include 62 to 67 (RTVLLK), 77 to 78 (FT), Lys-84, and Gln-106. Substrate is bound by residues Tyr-124, Arg-128, and Ser-132. FMN-binding positions include 141–142 (QS) and Trp-186. 192–194 (RLH) contributes to the substrate binding site. Arg-196 serves as a coordination point for FMN.

Belongs to the pyridoxamine 5'-phosphate oxidase family. In terms of assembly, homodimer. FMN serves as cofactor.

The catalysed reaction is pyridoxamine 5'-phosphate + O2 + H2O = pyridoxal 5'-phosphate + H2O2 + NH4(+). It catalyses the reaction pyridoxine 5'-phosphate + O2 = pyridoxal 5'-phosphate + H2O2. Its pathway is cofactor metabolism; pyridoxal 5'-phosphate salvage; pyridoxal 5'-phosphate from pyridoxamine 5'-phosphate: step 1/1. It functions in the pathway cofactor metabolism; pyridoxal 5'-phosphate salvage; pyridoxal 5'-phosphate from pyridoxine 5'-phosphate: step 1/1. Its function is as follows. Catalyzes the oxidation of either pyridoxine 5'-phosphate (PNP) or pyridoxamine 5'-phosphate (PMP) into pyridoxal 5'-phosphate (PLP). The sequence is that of Pyridoxine/pyridoxamine 5'-phosphate oxidase 2 from Hydrogenovibrio crunogenus (strain DSM 25203 / XCL-2) (Thiomicrospira crunogena).